A 506-amino-acid chain; its full sequence is Galactose/methyl galactoside import ATP-binding protein MglA (506 aa).

ABC transporter domains follow at residues 14–249 and 260–506; these read LTMT…VGRE and TPKE…AKYL. 46–53 serves as a coordination point for ATP; the sequence is GENGAGKS.

This sequence belongs to the ABC transporter superfamily. Galactose/methyl galactoside importer (TC 3.A.1.2.3) family. The complex is composed of one ATP-binding protein (MglA), two transmembrane proteins (MglC) and a solute-binding protein (MglB).

The protein resides in the cell inner membrane. It catalyses the reaction D-galactose(out) + ATP + H2O = D-galactose(in) + ADP + phosphate + H(+). The enzyme catalyses methyl beta-D-galactoside(out) + ATP + H2O = methyl beta-D-galactoside(in) + ADP + phosphate + H(+). Its function is as follows. Part of the ABC transporter complex MglABC involved in galactose/methyl galactoside import. Responsible for energy coupling to the transport system. In Pasteurella multocida (strain Pm70), this protein is Galactose/methyl galactoside import ATP-binding protein MglA.